The chain runs to 113 residues: UPF0482 protein YnfB (113 aa).

Positions Met1 to Ala28 are cleaved as a signal peptide.

The protein belongs to the UPF0482 family.

The chain is UPF0482 protein YnfB from Shigella dysenteriae serotype 1 (strain Sd197).